The following is a 366-amino-acid chain: Chorismate synthase (366 aa).

R48 lines the NADP(+) pocket. FMN contacts are provided by residues R125–S127, G285, K300–S304, and R327.

Belongs to the chorismate synthase family. FMNH2 serves as cofactor.

The catalysed reaction is 5-O-(1-carboxyvinyl)-3-phosphoshikimate = chorismate + phosphate. Its pathway is metabolic intermediate biosynthesis; chorismate biosynthesis; chorismate from D-erythrose 4-phosphate and phosphoenolpyruvate: step 7/7. Its function is as follows. Catalyzes the anti-1,4-elimination of the C-3 phosphate and the C-6 proR hydrogen from 5-enolpyruvylshikimate-3-phosphate (EPSP) to yield chorismate, which is the branch point compound that serves as the starting substrate for the three terminal pathways of aromatic amino acid biosynthesis. This reaction introduces a second double bond into the aromatic ring system. This is Chorismate synthase from Methanococcoides burtonii (strain DSM 6242 / NBRC 107633 / OCM 468 / ACE-M).